A 130-amino-acid chain; its full sequence is Anti-adapter protein IraD (130 aa).

The protein belongs to the GpW/Gp25 family. IraD subfamily. Interacts with RssB.

The protein resides in the cytoplasm. Functionally, inhibits RpoS proteolysis by regulating RssB activity, thereby increasing the stability of the sigma stress factor RpoS during oxidative stress. Its effect on RpoS stability is due to its interaction with RssB, which probably blocks the interaction of RssB with RpoS, and the consequent delivery of the RssB-RpoS complex to the ClpXP protein degradation pathway. This is Anti-adapter protein IraD from Escherichia coli O157:H7.